Reading from the N-terminus, the 101-residue chain is Feather keratin Cos1-1/Cos1-3/Cos2-1 (101 aa).

Serine 2 carries the post-translational modification N-acetylserine.

It belongs to the avian keratin family. In terms of assembly, the avian keratins (F-ker, S-ker, C-ker and B-ker) are a complex mixture of very similar polypeptides.

The polypeptide is Feather keratin Cos1-1/Cos1-3/Cos2-1 (Columba livia (Rock dove)).